We begin with the raw amino-acid sequence, 251 residues long: Hydroxyacylglutathione hydrolase (251 aa).

Residues histidine 53, histidine 55, aspartate 57, histidine 58, histidine 110, aspartate 127, and histidine 165 each coordinate Zn(2+).

It belongs to the metallo-beta-lactamase superfamily. Glyoxalase II family. In terms of assembly, monomer. Requires Zn(2+) as cofactor.

The enzyme catalyses an S-(2-hydroxyacyl)glutathione + H2O = a 2-hydroxy carboxylate + glutathione + H(+). It functions in the pathway secondary metabolite metabolism; methylglyoxal degradation; (R)-lactate from methylglyoxal: step 2/2. Its function is as follows. Thiolesterase that catalyzes the hydrolysis of S-D-lactoyl-glutathione to form glutathione and D-lactic acid. The protein is Hydroxyacylglutathione hydrolase of Escherichia coli O81 (strain ED1a).